A 298-amino-acid polypeptide reads, in one-letter code: Protoheme IX farnesyltransferase (298 aa).

9 helical membrane passes run 19 to 39 (VMSL…QPVN), 40 to 60 (PFVA…SGAL), 91 to 111 (LAVG…GGNW), 112 to 132 (FAAG…TIWL), 140 to 160 (IVIG…LPTG), 167 to 187 (LLMF…LALF), 213 to 233 (IFAY…TSVG), 236 to 256 (LYLA…WQIL), and 277 to 297 (LSLY…WVGG).

The protein belongs to the UbiA prenyltransferase family. Protoheme IX farnesyltransferase subfamily. As to quaternary structure, interacts with CtaA.

Its subcellular location is the cell inner membrane. The enzyme catalyses heme b + (2E,6E)-farnesyl diphosphate + H2O = Fe(II)-heme o + diphosphate. The protein operates within porphyrin-containing compound metabolism; heme O biosynthesis; heme O from protoheme: step 1/1. Converts heme B (protoheme IX) to heme O by substitution of the vinyl group on carbon 2 of heme B porphyrin ring with a hydroxyethyl farnesyl side group. The polypeptide is Protoheme IX farnesyltransferase (Paracoccus denitrificans).